Reading from the N-terminus, the 611-residue chain is Actin-interacting protein 1 (611 aa).

WD repeat units lie at residues 57–96, 145–185, 188–227, 237–276, 322–361, 446–485, 489–528, 534–573, and 579–610; these read EHSH…HILK, GQAR…FKST, EHTK…KTGV, AHSG…VEKT, GHNK…SNRV, PISY…VSEV, VHPA…ELAH, FHTA…DHPI, and HAMS…WNVP.

This sequence belongs to the WD repeat AIP1 family.

Its subcellular location is the cytoplasm. It localises to the cytoskeleton. Functionally, induces disassembly of actin filaments in conjunction with ADF/cofilin family proteins. Regulator of actin organization in myofibrils. This is Actin-interacting protein 1 (unc-78) from Caenorhabditis elegans.